The following is a 459-amino-acid chain: WPP domain-interacting protein 3 (459 aa).

A compositionally biased stretch (polar residues) spans 1-17; the sequence is MNESVPDSVEDNGNSVP. A disordered region spans residues 1–78; that stretch reads MNESVPDSVE…GPVRDEAAPV (78 aa). Positions 52–66 are enriched in basic residues; it reads STRKGFGLKKWRRIK. 2 consecutive short sequence motifs (nuclear localization signal) follow at residues 60–61 and 63–64; these read KK and RR. Positions 67-78 are enriched in basic and acidic residues; that stretch reads RDGPVRDEAAPV. Positions 86–87 match the Nuclear localization signal 3 motif; the sequence is KR. Disordered regions lie at residues 240–266 and 308–330; these read KEEVQTYSRSENGNKEDDGESKKNNNH and TDELSSDQPSHQNCKEDNSTSSG. Residues 251-266 show a composition bias toward basic and acidic residues; that stretch reads NGNKEDDGESKKNNNH. The span at 308-319 shows a compositional bias: polar residues; that stretch reads TDELSSDQPSHQ. The stretch at 331–375 forms a coiled coil; it reads SKALILKEKVKLLEHKLEEARAALEAKEARIQELENSKIESELEC. Residues 426 to 459 enclose the KASH domain; that stretch reads KLGFYILTQLILLVSILRFLVLQFSPASRLVIPT. A helical membrane pass occupies residues 427 to 447; sequence LGFYILTQLILLVSILRFLVL.

As to quaternary structure, component of Ran complexes at least composed of WIT1 or WIT2, RANGAP1 or RANGAP2, and WIP1 or WIP2 or WIP3. Interacts with RANGAP1, WPP1/MAF1, and WPP2/MAF2. Interacts with SUN1 and SUN2. Core component of the LINC complex which is composed of inner nuclear membrane SUN domain-containing proteins coupled to outer nuclear membrane WIP and WIT proteins. The LINC complex also involves nucleoskeletal proteins CRWN/LINC and possibly KAKU4 and the cytoskeletal myosin KAKU1. Interacts with WIT2. In terms of tissue distribution, expressed in seedlings, roots, stems, leaves, and flowers.

It is found in the nucleus envelope. The protein resides in the nucleus membrane. In terms of biological role, mediates and enhances the nuclear envelope docking of RANGAP proteins mediated by WIT1 and WIT2 in the undifferentiated cells of root tips. As component of the SUN-WIP-WIT2-KAKU1 complex, mediates the transfer of cytoplasmic forces to the nuclear envelope (NE), leading to nuclear shape changes. In Arabidopsis thaliana (Mouse-ear cress), this protein is WPP domain-interacting protein 3 (WIP3).